A 252-amino-acid polypeptide reads, in one-letter code: Phosphate import ATP-binding protein PstB (252 aa).

One can recognise an ABC transporter domain in the interval 6–247 (ISAENLNLFY…PKDQRTEDYI (242 aa)). 38–45 (GPSGCGKS) serves as a coordination point for ATP.

It belongs to the ABC transporter superfamily. Phosphate importer (TC 3.A.1.7) family. The complex is composed of two ATP-binding proteins (PstB), two transmembrane proteins (PstC and PstA) and a solute-binding protein (PstS).

The protein localises to the cell membrane. The catalysed reaction is phosphate(out) + ATP + H2O = ADP + 2 phosphate(in) + H(+). Part of the ABC transporter complex PstSACB involved in phosphate import. Responsible for energy coupling to the transport system. The sequence is that of Phosphate import ATP-binding protein PstB from Heliobacterium mobile (Heliobacillus mobilis).